The chain runs to 103 residues: N(4)-acetylcytidine amidohydrolase (103 aa).

The ASCH domain maps to 6-100 (ITFFQRFQND…NQMQFYVIDF (95 aa)). The active-site Proton acceptor is Lys21. The active-site Nucleophile is the Thr24. The Proton donor role is filled by Glu74.

The protein belongs to the N(4)-acetylcytidine amidohydrolase family.

It carries out the reaction N(4)-acetylcytidine + H2O = cytidine + acetate + H(+). It catalyses the reaction N(4)-acetyl-2'-deoxycytidine + H2O = 2'-deoxycytidine + acetate + H(+). The catalysed reaction is N(4)-acetylcytosine + H2O = cytosine + acetate + H(+). Its function is as follows. Catalyzes the hydrolysis of N(4)-acetylcytidine (ac4C). The polypeptide is N(4)-acetylcytidine amidohydrolase (yqfB) (Salmonella arizonae (strain ATCC BAA-731 / CDC346-86 / RSK2980)).